We begin with the raw amino-acid sequence, 185 residues long: Ribosome-recycling factor (185 aa).

This sequence belongs to the RRF family.

The protein localises to the cytoplasm. Its function is as follows. Responsible for the release of ribosomes from messenger RNA at the termination of protein biosynthesis. May increase the efficiency of translation by recycling ribosomes from one round of translation to another. The chain is Ribosome-recycling factor from Bacillus anthracis (strain A0248).